Consider the following 149-residue polypeptide: Oligosaccharyltransferase complex subunit OSTC (149 aa).

Over methionine 1 to threonine 32 the chain is Cytoplasmic. Residues valine 33 to isoleucine 53 form a helical membrane-spanning segment. Residues valine 54–tyrosine 83 lie on the Extracellular side of the membrane. Residues isoleucine 84–leucine 104 form a helical membrane-spanning segment. The Cytoplasmic portion of the chain corresponds to aspartate 105 to arginine 117. Residues phenylalanine 118–phenylalanine 138 form a helical membrane-spanning segment. The Extracellular portion of the chain corresponds to methionine 139–glycine 149.

The protein belongs to the OSTC family. In terms of assembly, component of STT3A-containing oligosaccharyl transferase (OST-A) complex. STT3A-containing complex assembly occurs through the formation of 3 subcomplexes. Subcomplex 1 contains RPN1 and TMEM258, subcomplex 2 contains the STT3A-specific subunits STT3A, DC2/OSTC, and KCP2 as well as the core subunit OST4, and subcomplex 3 contains RPN2, DAD1, and OST48. The OST-A complex can form stable complexes with the Sec61 complex or with both the Sec61 and TRAP complexes. Interacts with PSEN1 and NCSTN; indicative for an association with the gamma-secretase complex.

The protein resides in the endoplasmic reticulum. It is found in the membrane. It participates in protein modification; protein glycosylation. Functionally, subunit of STT3A-containing oligosaccharyl transferase (OST-A) complex that catalyzes the initial transfer of a defined glycan (Glc(3)Man(9)GlcNAc(2) in eukaryotes) from the lipid carrier dolichol-pyrophosphate to an asparagine residue within an Asn-X-Ser/Thr consensus motif in nascent polypeptide chains, the first step in protein N-glycosylation. N-glycosylation occurs cotranslationally and the complex associates with the Sec61 complex at the channel-forming translocon complex that mediates protein translocation across the endoplasmic reticulum (ER). Within the OST-A complex, acts as an adapter that anchors the OST-A complex to the Sec61 complex. May be involved in N-glycosylation of APP (amyloid-beta precursor protein). Can modulate gamma-secretase cleavage of APP by enhancing endoprotelysis of PSEN1. The sequence is that of Oligosaccharyltransferase complex subunit OSTC from Canis lupus familiaris (Dog).